A 56-amino-acid polypeptide reads, in one-letter code: Small ribosomal subunit protein uS14 (56 aa).

4 residues coordinate Zn(2+): Cys-21, Cys-24, Cys-39, and Cys-42.

It belongs to the universal ribosomal protein uS14 family. Zn(2+) is required as a cofactor.

This Triticum aestivum (Wheat) protein is Small ribosomal subunit protein uS14 (RPS29).